The following is a 64-amino-acid chain: Large ribosomal subunit protein uL29 (64 aa).

This sequence belongs to the universal ribosomal protein uL29 family.

The chain is Large ribosomal subunit protein uL29 from Synechococcus elongatus (strain ATCC 33912 / PCC 7942 / FACHB-805) (Anacystis nidulans R2).